Here is a 1401-residue protein sequence, read N- to C-terminus: Alpha-latrotoxin-Lt1a (1401 aa).

An N-terminal signal peptide occupies residues 1-20; that stretch reads MISVGEIMERANHSLVRMRR. The interval 17 to 20 is furin-like endopeptidase recognition region; sequence RMRR. Positions 238 to 257 are helix H8 is the probable transmembrane region of the tetrameric pore inserted in the target cell membrane; it reads VLYALLYGTQTYVSVMFFLL. A disulfide bond links Cys413 and Cys1066. ANK repeat units lie at residues 458 to 489, 490 to 521, 525 to 554, 559 to 589, 593 to 622, 626 to 656, 660 to 690, 695 to 723, 729 to 758, 762 to 791, 795 to 824, 828 to 857, 862 to 891, 895 to 924, 928 to 957, 971 to 1003, 1004 to 1033, 1035 to 1064, 1068 to 1097, 1101 to 1131, 1137 to 1166, and 1170 to 1199; these read LYNA…ATFD, HGRT…ELNQ, KGYT…SINS, FLQT…NINE, DGFT…DVNA, TGLT…DINA, NNIT…NANV, GLLS…NVNV, GGIT…NIEQ, EKYT…NFEA, SGAT…NWRD, NGQM…TVVD, NSDT…DINT, KGLA…NVYI, DGMN…KFEW, EECA…GNFA, ICGP…SVDG, KTDT…KVNH, NGMT…DFRR, RGTT…DINI, DKDT…DVTI, and YDKT…KFRR. Residues 1026 to 1032 form a 4C4.1 epitope region; it reads EEFLSVD. The segment at 1196-1199 is furin-like endopeptidase recognition region; the sequence is KFRR. Positions 1200–1401 are excised as a propeptide; it reads EYKSSYGERS…SDGILTKKLM (202 aa).

It belongs to the cationic peptide 01 (latrotoxin) family. 03 (alpha-latrotoxin) subfamily. As to quaternary structure, homotetramer in membranes. Processed by furin-like proteases at both the N- and C-termini. In terms of tissue distribution, expressed in venom gland, cephalothorax, and abdomen tissues from both males and females.

The protein localises to the secreted. Its subcellular location is the target cell membrane. In terms of biological role, presynaptic neurotoxin that causes massive release of neurotransmitters from vertebrate (but not invertebrate) nerve terminals and endocrine cells via a complex mechanism involving activation of receptor(s) and toxin insertion into the plasma membrane with subsequent pore formation. Binds to neurexin-1-alpha (NRXN1) in a calcium dependent manner, adhesion G protein-coupled receptor L1 (ADGRL1, also termed latrophilin-1 and calcium-independent receptor of latrotoxin (CIRL)), and receptor-type tyrosine-protein phosphatase S (PTPRS), also termed PTP sigma. NRXN1 and PTPRS are suggested to provide a platform for binding and subsequent pore formation events. In contrast, binding to ADGRL1 does not involve oligomerization and channel formation, but direct downstream stimulation of the synaptic fusion machinery. In Latrodectus tredecimguttatus (Mediterranean black widow spider), this protein is Alpha-latrotoxin-Lt1a.